The following is a 623-amino-acid chain: Zinc finger protein 131 (623 aa).

Residues 34-98 form the BTB domain; that stretch reads TDITLIVDGH…TYTAKLMIQG (65 aa). Positions 137–148 match the Nuclear localization signal 1 motif; the sequence is TGKNEAKKRKIA. 3 C2H2-type zinc fingers span residues 261–283, 288–311, and 328–350; these read FHCE…MKSH, FKCE…NCYH, and HVCQ…LRKH. Glycyl lysine isopeptide (Lys-Gly) (interchain with G-Cter in SUMO2) cross-links involve residues Lys-289 and Lys-295. Positions 317 to 328 match the Nuclear localization signal 2 motif; it reads VSKKQRTGKKIH. The C2H2-type 4; degenerate zinc-finger motif lies at 356–381; the sequence is FECPNCHERFARNSTLKCHLTACQTG. 2 C2H2-type zinc fingers span residues 392 to 414 and 420 to 443; these read YECQ…LVIH and NHCT…SDAH. Residues 573-617 are compositionally biased toward basic and acidic residues; that stretch reads NQEERESSQADAAEAAREDHEDAEDLETKPTVDSEAEKAENEDRT. The disordered stretch occupies residues 573–623; it reads NQEERESSQADAAEAAREDHEDAEDLETKPTVDSEAEKAENEDRTALPVLE. Lys-601 participates in a covalent cross-link: Glycyl lysine isopeptide (Lys-Gly) (interchain with G-Cter in SUMO).

It belongs to the krueppel C2H2-type zinc-finger protein family. Monosumoylated at Lys-601 by CBX4 and UHRF2. Sumoylation may potentiate ZNF131 inhibition of estrogen signaling. Sumoylation does not interfere with ubiquitination. Post-translationally, ubiquitinated. Predominant expression is found in different brain areas such as the occipital and temporal lobe, the nucleus caudatus, hippocampus, and the cerebellum as well as in testis and thymus.

It is found in the nucleus. Its function is as follows. Plays a role during development and organogenesis as well as in the function of the adult central nervous system. May be involved in transcriptional regulation as a repressor of ESR1/ER-alpha signaling. The protein is Zinc finger protein 131 (ZNF131) of Homo sapiens (Human).